A 483-amino-acid chain; its full sequence is WAS/WASL-interacting protein family member 3 (483 aa).

The segment covering 1-29 (MPVPPPPPPPLPPPPPPLGAPPPPPPSAP) has biased composition (pro residues). The tract at residues 1-414 (MPVPPPPPPP…GGQLRNGSLH (414 aa)) is disordered. 3 consecutive short sequence motifs (profilin-binding motif) follow at residues 3–8 (VPPPPP), 11–16 (LPPPPP), and 20–25 (APPPPP). The 18-residue stretch at 45 to 62 (GRSALLADIQQGTRLRKV) folds into the WH2 domain. An Asymmetric dimethylarginine modification is found at Arg-46. Residues 58–61 (RLRK) carry the RLRK motif. 2 stretches are compositionally biased toward polar residues: residues 63–78 (TQINDRSAPQIESSKG) and 87–96 (ANTRGASTPP). A Phosphoserine modification is found at Ser-149. The segment covering 166–192 (PPRPNVPAPPPPTPPPPPPPLPPPLPS) has biased composition (pro residues). The residue at position 202 (Ser-202) is a Phosphoserine. Composition is skewed to pro residues over residues 215-239 (VAPPVPCAPPPPPPPPPPTPPPLPP) and 256-271 (HLPPIPPPLPLLPPCG). The span at 277–288 (AEPASPAQDAQE) shows a compositional bias: low complexity. The span at 289–298 (PPAPPPPLPP) shows a compositional bias: pro residues. Low complexity-rich tracts occupy residues 299–308 (YASCSPRASL) and 331–345 (PSFQAPPQKAGAQAL). Ser-383 is modified (phosphoserine). Over residues 393–404 (QQATAWTPTQQP) the composition is skewed to low complexity. A WASP-binding motif motif is present at residues 424–448 (TFHSVEDFPPPDEYKPCQKIYPSKI). The tract at residues 461-483 (EAVGQSSDDIKGRNSQLSLKTLR) is disordered. A compositionally biased stretch (polar residues) spans 473-483 (RNSQLSLKTLR).

This sequence belongs to the verprolin family. As to quaternary structure, interacts with WASL, and monomeric and filamentous actin.

It is found in the cytoplasm. May be a regulator of cytoskeletal organization. May have a role in spermatogenesis. In Homo sapiens (Human), this protein is WAS/WASL-interacting protein family member 3 (WIPF3).